The chain runs to 251 residues: Tropomyosin-2 (251 aa).

Residues 1–251 (MSGEEKLGKL…DTVADEPDDE (251 aa)) adopt a coiled-coil conformation.

The protein belongs to the tropomyosin family. Homodimer. Striated muscle specific.

This Podocoryna carnea (Hydrozoan) protein is Tropomyosin-2 (TPM2).